A 101-amino-acid polypeptide reads, in one-letter code: NAD(P)H-quinone oxidoreductase subunit 4L, chloroplastic (101 aa).

A run of 3 helical transmembrane segments spans residues 2-22 (MLEHVLVLSAYLLSIGIYGLI), 32-52 (MCLELILNAVNMNFVTFSDLF), and 61-81 (IFSIFVIAIAAAEAAIGLAIV).

It belongs to the complex I subunit 4L family. As to quaternary structure, NDH is composed of at least 16 different subunits, 5 of which are encoded in the nucleus.

It localises to the plastid. The protein localises to the chloroplast thylakoid membrane. It catalyses the reaction a plastoquinone + NADH + (n+1) H(+)(in) = a plastoquinol + NAD(+) + n H(+)(out). The enzyme catalyses a plastoquinone + NADPH + (n+1) H(+)(in) = a plastoquinol + NADP(+) + n H(+)(out). Functionally, NDH shuttles electrons from NAD(P)H:plastoquinone, via FMN and iron-sulfur (Fe-S) centers, to quinones in the photosynthetic chain and possibly in a chloroplast respiratory chain. The immediate electron acceptor for the enzyme in this species is believed to be plastoquinone. Couples the redox reaction to proton translocation, and thus conserves the redox energy in a proton gradient. The protein is NAD(P)H-quinone oxidoreductase subunit 4L, chloroplastic of Nandina domestica (Heavenly bamboo).